The primary structure comprises 169 residues: Flagellar biosynthetic protein FliU (169 aa).

The protein belongs to the FliB family.

Its function is as follows. Required for the secretion of flagellin and expression of motility. In Salmonella muenchen, this protein is Flagellar biosynthetic protein FliU (fliU).